The primary structure comprises 473 residues: Glycosyl hydrolase family 109 protein 2 (473 aa).

Residues 1-31 (MSIFSSRRQFLKSLGLAAGAAAAGNALPGKA) constitute a signal peptide (tat-type signal). NAD(+) is bound by residues 77–78 (GR), D99, 148–151 (WSSH), 168–169 (EV), and N197. Substrate is bound by residues Y226, R244, 256–259 (YPTH), and Y339. Residue Y256 coordinates NAD(+).

Belongs to the Gfo/Idh/MocA family. Glycosyl hydrolase 109 subfamily. NAD(+) is required as a cofactor. Predicted to be exported by the Tat system. The position of the signal peptide cleavage has not been experimentally proven.

Glycosidase. The chain is Glycosyl hydrolase family 109 protein 2 from Akkermansia muciniphila (strain ATCC BAA-835 / DSM 22959 / JCM 33894 / BCRC 81048 / CCUG 64013 / CIP 107961 / Muc).